The sequence spans 153 residues: Guanyl-specific ribonuclease N1 (153 aa).

Positions 1-20 (MVQLLSAFVSLLSVVAVSGA) are cleaved as a signal peptide. The propeptide occupies 21–49 (AIPAPAPEAVVDVAPETATIEPTGNFTAQ). Cystine bridges form between Cys-51–Cys-59 and Cys-55–Cys-152. The active site involves His-89. The active-site Proton acceptor is the Glu-107. His-141 (proton donor) is an active-site residue.

It belongs to the ribonuclease N1/T1 family.

The catalysed reaction is [RNA] containing guanosine + H2O = an [RNA fragment]-3'-guanosine-3'-phosphate + a 5'-hydroxy-ribonucleotide-3'-[RNA fragment].. This chain is Guanyl-specific ribonuclease N1 (grn), found in Neurospora crassa (strain ATCC 24698 / 74-OR23-1A / CBS 708.71 / DSM 1257 / FGSC 987).